We begin with the raw amino-acid sequence, 413 residues long: 1-deoxy-D-xylulose 5-phosphate reductoisomerase (413 aa).

NADPH-binding residues include T13, G14, S15, I16, K40, N41, and N127. K128 contacts 1-deoxy-D-xylulose 5-phosphate. E129 provides a ligand contact to NADPH. D153 is a Mn(2+) binding site. 1-deoxy-D-xylulose 5-phosphate is bound by residues S154, E155, S184, and H207. E155 lines the Mn(2+) pocket. An NADPH-binding site is contributed by G213. 1-deoxy-D-xylulose 5-phosphate-binding residues include S220, N225, K226, and E229. E229 lines the Mn(2+) pocket.

The protein belongs to the DXR family. Mg(2+) is required as a cofactor. Requires Mn(2+) as cofactor.

It catalyses the reaction 2-C-methyl-D-erythritol 4-phosphate + NADP(+) = 1-deoxy-D-xylulose 5-phosphate + NADPH + H(+). Its pathway is isoprenoid biosynthesis; isopentenyl diphosphate biosynthesis via DXP pathway; isopentenyl diphosphate from 1-deoxy-D-xylulose 5-phosphate: step 1/6. Functionally, catalyzes the NADPH-dependent rearrangement and reduction of 1-deoxy-D-xylulose-5-phosphate (DXP) to 2-C-methyl-D-erythritol 4-phosphate (MEP). This chain is 1-deoxy-D-xylulose 5-phosphate reductoisomerase, found in Nitrosomonas eutropha (strain DSM 101675 / C91 / Nm57).